Reading from the N-terminus, the 228-residue chain is Urease accessory protein UreF (228 aa).

The protein belongs to the UreF family. In terms of assembly, ureD, UreF and UreG form a complex that acts as a GTP-hydrolysis-dependent molecular chaperone, activating the urease apoprotein by helping to assemble the nickel containing metallocenter of UreC. The UreE protein probably delivers the nickel.

It localises to the cytoplasm. Required for maturation of urease via the functional incorporation of the urease nickel metallocenter. The chain is Urease accessory protein UreF from Lachnoclostridium phytofermentans (strain ATCC 700394 / DSM 18823 / ISDg) (Clostridium phytofermentans).